A 64-amino-acid polypeptide reads, in one-letter code: Large ribosomal subunit protein bL35 (64 aa).

Residues 1-23 form a disordered region; sequence MPKMKTHRGAAKRFKKTKNKIKR.

Belongs to the bacterial ribosomal protein bL35 family.

This Nitratiruptor sp. (strain SB155-2) protein is Large ribosomal subunit protein bL35.